The chain runs to 161 residues: Dermonecrotic toxin LarSicTox-alphaI-1 (161 aa).

This sequence belongs to the arthropod phospholipase D family. Class II subfamily. Mg(2+) is required as a cofactor. Post-translationally, contains 2 disulfide bonds. As to expression, expressed by the venom gland.

It localises to the secreted. It catalyses the reaction an N-(acyl)-sphingosylphosphocholine = an N-(acyl)-sphingosyl-1,3-cyclic phosphate + choline. The enzyme catalyses an N-(acyl)-sphingosylphosphoethanolamine = an N-(acyl)-sphingosyl-1,3-cyclic phosphate + ethanolamine. It carries out the reaction a 1-acyl-sn-glycero-3-phosphocholine = a 1-acyl-sn-glycero-2,3-cyclic phosphate + choline. The catalysed reaction is a 1-acyl-sn-glycero-3-phosphoethanolamine = a 1-acyl-sn-glycero-2,3-cyclic phosphate + ethanolamine. Dermonecrotic toxins cleave the phosphodiester linkage between the phosphate and headgroup of certain phospholipids (sphingolipid and lysolipid substrates), forming an alcohol (often choline) and a cyclic phosphate. This toxin acts on sphingomyelin (SM). It may also act on ceramide phosphoethanolamine (CPE), lysophosphatidylcholine (LPC) and lysophosphatidylethanolamine (LPE), but not on lysophosphatidylserine (LPS), and lysophosphatidylglycerol (LPG). It acts by transphosphatidylation, releasing exclusively cyclic phosphate products as second products. Induces dermonecrosis, hemolysis, increased vascular permeability, edema, inflammatory response, and platelet aggregation. The sequence is that of Dermonecrotic toxin LarSicTox-alphaI-1 from Loxosceles arizonica (Arizona brown spider).